A 72-amino-acid polypeptide reads, in one-letter code: Delta-actitoxin-Avd2b 3 (72 aa).

A signal peptide spans 1-21 (MMSRLLVFLMLGAAFMLVVSA). The propeptide occupies 22-42 (NDAYGDEPAFKDLNQGDESLG). 3 disulfides stabilise this stretch: Cys47-Cys62, Cys48-Cys56, and Cys50-Cys67.

It belongs to the sea anemone short toxin (type III) family.

The protein localises to the secreted. It localises to the nematocyst. In terms of biological role, voltage-gated sodium channel (Nav) inhibitor. 1 uM completely inhibits insect voltage-gated sodium channel inactivation (DmNav1 from D.melanogaster). In Anemonia viridis (Snakelocks anemone), this protein is Delta-actitoxin-Avd2b 3.